Consider the following 200-residue polypeptide: TATA-box-binding protein (200 aa).

2 consecutive repeat copies span residues 25-101 (LQNI…ARII) and 115-192 (IQNI…YPVL).

It belongs to the TBP family. Belongs to the TFIID complex together with the TBP-associated factors (TAFs). Binds DNA as monomer.

It is found in the nucleus. In terms of biological role, general transcription factor that functions at the core of the DNA-binding multiprotein factor TFIID. Binding of TFIID to the TATA box is the initial transcriptional step of the pre-initiation complex (PIC), playing a role in the activation of eukaryotic genes transcribed by RNA polymerase II. This Mesembryanthemum crystallinum (Common ice plant) protein is TATA-box-binding protein.